A 124-amino-acid chain; its full sequence is MCHTSCSSGCQAACVPSSCQPSCSTSSPCHTSCFTSSLCQPTCSTSSTCQATCVPVSYRPAVCLPVTYKPTLCVTPSCQSSVFLPVSYRPAVYVAPSCQSSGCYQPSCPTLVYRPISCSTSSCF.

A run of 20 repeats spans residues 10 to 13 (CQAA), 14 to 18 (CVPSS), 19 to 23 (CQPSC), 24 to 28 (STSSP), 33 to 38 (CFTSSL), 39 to 43 (CQPTC), 44 to 48 (STSST), 49 to 52 (CQAT), 53 to 57 (CVPVS), 58 to 62 (YRPAV), 63 to 67 (CLPVT), 68 to 72 (YKPTL), 73 to 77 (CVTPS), 78 to 82 (CQSSV), 83 to 87 (FLPVS), 88 to 92 (YRPAV), 98 to 102 (CQSSG), 103 to 107 (CYQPS), 108 to 112 (CPTLV), and 113 to 117 (YRPIS). Positions 10–117 (CQAACVPSSC…CPTLVYRPIS (108 aa)) are 20 X 5 AA approximate repeats.

The protein belongs to the KRTAP type 12 family. Interacts with hair keratins.

In terms of biological role, in the hair cortex, hair keratin intermediate filaments are embedded in an interfilamentous matrix, consisting of hair keratin-associated proteins (KRTAP), which are essential for the formation of a rigid and resistant hair shaft through their extensive disulfide bond cross-linking with abundant cysteine residues of hair keratins. The matrix proteins include the high-sulfur and high-glycine-tyrosine keratins. In Bos taurus (Bovine), this protein is Keratin-associated protein 12-2.